The chain runs to 261 residues: Triosephosphate isomerase (261 aa).

10–12 is a substrate binding site; it reads NWK. Histidine 100 serves as the catalytic Electrophile. The active-site Proton acceptor is the glutamate 172. Residues glycine 178, serine 218, and 239 to 240 each bind substrate; that span reads GG.

This sequence belongs to the triosephosphate isomerase family. Homodimer.

The protein localises to the cytoplasm. It carries out the reaction D-glyceraldehyde 3-phosphate = dihydroxyacetone phosphate. Its pathway is carbohydrate biosynthesis; gluconeogenesis. The protein operates within carbohydrate degradation; glycolysis; D-glyceraldehyde 3-phosphate from glycerone phosphate: step 1/1. Functionally, involved in the gluconeogenesis. Catalyzes stereospecifically the conversion of dihydroxyacetone phosphate (DHAP) to D-glyceraldehyde-3-phosphate (G3P). This chain is Triosephosphate isomerase, found in Mycobacterium tuberculosis (strain CDC 1551 / Oshkosh).